Here is a 214-residue protein sequence, read N- to C-terminus: External core antigen (214 aa).

Residues 1-19 form the signal peptide; the sequence is MQLFHLCLIISCTCPTVQA. The interval 25–27 is HBEAG; sequence GWL. Positions 165–214 are disordered; the sequence is NAPILSTLPETTVVRRRDRGRSPRRRTPSPRRRRSPSPRRRRSQSRESQC. Over residues 178-207 the composition is skewed to basic residues; that stretch reads VRRRDRGRSPRRRTPSPRRRRSPSPRRRRS. Residues 186–192 form a 1; half-length repeat; it reads SPRRRTP. The segment at 186 to 208 is 3 X 8 AA repeats of S-P-R-R-R-R-S-[PQ]; that stretch reads SPRRRTPSPRRRRSPSPRRRRSQ. The propeptide occupies 186 to 214; the sequence is SPRRRTPSPRRRRSPSPRRRRSQSRESQC. Tandem repeats lie at residues 193–200 and 201–208.

It belongs to the orthohepadnavirus precore antigen family. Homodimerizes. In terms of processing, phosphorylated. Post-translationally, cleaved by host furin.

It is found in the secreted. Its subcellular location is the host nucleus. Functionally, may regulate immune response to the intracellular capsid in acting as a T-cell tolerogen, by having an immunoregulatory effect which prevents destruction of infected cells by cytotoxic T-cells. This immune regulation may predispose to chronicity during perinatal infections and prevent severe liver injury during adult infections. The polypeptide is External core antigen (Hepatitis B virus genotype A2 subtype adw2 (strain Rutter 1979) (HBV-A)).